The sequence spans 901 residues: MAGQEDEYDPILDNKREAEAKSQVSVAADKNMAPSTSGTPIHRSGSRPQLDLSKAEIQGNLEERDPTILLPNQSDDISHLALDIGGSLIKLLYFSRHEDYSNDDDKRKRTIKERLGITNGNLRSYPVLGGRLHFVKFETHKINECLDFIHSKQLHRRDPYPWSSKTLPLGTGVIKVTGGGAFKFADLFKERLGVSIEKEDEMHCLVSGANFLLKAIRHEAFTHMEGEKEFVQIDPNDLYPYLLVNVGSGVSIIKVDGEGKFERVSGTNVGGGTYWGLGRLLTKCKSFDELLELSQKGDNSAIDMLVGDIYGGMDYSKIGLSASTIASSFGKAISENKELDDYRPEDISLSLLRMISYNIGQISYLNALRFGLKRIFFGGFFIRGHAYTMDTISFAVHFWSKGEMQAMFLRHEGFLGALGAFMSYEKHGLDDLMSHQLVERFPMGAPYTGGNIHGPPLGDLDEKISWMEKFVRRGTEITAPVPMTPSKTTGLGGFEVPSSRGSALRSDASALNVGVLHLVPTLEVFPLLADPKTYEPNTIDLSDQGEREYWLKVLSEHLPDLVDTAVASEGGTEDAKRRGDAFARAFSAHLARLMEEPAAYGKLGLANLLELREECLREFQFVDAYRSIKQRENEASLAVLPDLLEELDSMSEEARLLTLIEGVLAANIFDWGSRACVDLYHKGTIIEIYRMSRNKMQRPWRVDDFDAFKERMLGSGGKQPHRHKRALLFVDNSGADVILGMLPLAREFLRRGTEVVLVANSLPALNDVTAMELPDIVAGAAKHCDILRRAAEMGGLLVDAMVNPGDGSKKDSTSAPLMVVENGCGSPCIDLRQVSSELAAAAKDADLVVLEGMGRALHTNFNAQFQCEALKLAMVKNQRLAEKLIKGNIYDCVCRYEPPSL.

The segment covering 1-10 (MAGQEDEYDP) has biased composition (acidic residues). The segment at 1 to 50 (MAGQEDEYDPILDNKREAEAKSQVSVAADKNMAPSTSGTPIHRSGSRPQL) is disordered. The tract at residues 1–466 (MAGQEDEYDP…LGDLDEKISW (466 aa)) is pantothenate kinase. Residues 467-901 (MEKFVRRGTE…CVCRYEPPSL (435 aa)) are 4'-phosphopantetheine phosphatase. Residues Asp-731, Asn-732, and Asp-767 each contribute to the Mn(2+) site. Residues 851–855 (EGMGR) carry the Subfamily II EGMGR motif motif.

In the N-terminal section; belongs to the type II pantothenate kinase family. It in the C-terminal section; belongs to the damage-control phosphatase family. Phosphopantetheine phosphatase II subfamily. It depends on Mn(2+) as a cofactor. Ni(2+) serves as cofactor. As to expression, highly expressed in leaves and developing seeds. Expressed in roots, stems and flowers.

It catalyses the reaction (R)-pantothenate + ATP = (R)-4'-phosphopantothenate + ADP + H(+). The enzyme catalyses (R)-4'-phosphopantothenate + H2O = (R)-pantothenate + phosphate. It carries out the reaction (R)-4'-phosphopantetheine + H2O = (R)-pantetheine + phosphate. The catalysed reaction is (R)-4'-phosphopantetheine sulfonate + H2O = (R)-pantetheine sulfonate + phosphate. The protein operates within cofactor biosynthesis; coenzyme A biosynthesis; CoA from (R)-pantothenate: step 1/5. Its activity is regulated as follows. Activity is strongly promoted by Co(2+), Ni(2+) and Mn(2+). Activity is inhibited by EDTA. Functionally, catalyzes the phosphorylation of pantothenate the first step in CoA biosynthesis. May play a role in the physiological regulation of the intracellular CoA concentration. Functionally redudant with PANK1. The phosphatase activity shows preference for normal or oxidatively damaged intermediates of 4'-phosphopantetheine, which provides strong indirect evidence that the phosphatase activity pre-empts damage in the CoA pathway. Hydrolyzing excess 4'-phosphopantetheine could constitute a directed overflow mechanism to prevent its oxidation to the S-sulfonate, sulfonate, or other forms. Hydrolyzing 4'-phosphopantetheine sulfonate or S-sulfonate would forestall their conversion to inactive forms of CoA and acyl carrier protein. The sequence is that of Pantothenate kinase 2 (PANK2) from Arabidopsis thaliana (Mouse-ear cress).